The primary structure comprises 773 residues: MAKETFSIEFAGRTLTVETGQVAKQANGAVVVRYGDTTVLTAATMGKMATGDFFPLQVNYEEKMYAAGKFPGGFNKREARPSTDATLTARLIDRPIRPMFAEGFRNEVQVINTVLSYDENASGRVAAMFGSSLALAISDIPFDRPIAGVEVAYIDGEYIINPTVAEKEASSLELSVAGNINAINMVESGAKELSEEVMLGALLAGHNAVKELIEFQNEIVAKVGKEKAEVELLHVDEDLKAEVIAAYNSDLQKAVQIEEKLARESATKAVKEAIISVYSAKYENDENLSIILRDLAEILEGMEHAEVRRLITEDKIRPDGRKIDEIRPLDAEIDFTPRNITHGTGLFTRGQTQALSTLTLAPMNEAQIIDGLNDEYKKRFMHHYNFPQYSVGETGRYGAPGRREIGHGALGERALEQVLPSLEEFPYAIRLVAEVLESNGSSSQASICAGTLALMAGGVPIKAPVAGIAMGLISDGTNYTVLTDIQGLEDHFGDMDFKVAGTRDGITALQMDIKISGITPEILAEALAQAKTARFQILDVIEATIAQPREELAPSAPKIDTITIPVDKIKVVIGKGGEQIDKIIAETGVKIDIDDEGLCSIFSSDQAAIDRAKEIIAELVREAKVGEIYDAKVVRIESFGAFVNLFGKQDAMVHISEMAWARTENVEDVVKLGDTVKVKIMKIDDKGRVDASMRALVEKPEGYVEPERKPRERRENGDRRKGNGNSNRGNGFDRRNNDRNNQGNKVGNHSFELRERKSHIDEEFPELSTKKPE.

Residues Asp490 and Asp496 each contribute to the Mg(2+) site. In terms of domain architecture, KH spans 557-616; that stretch reads PKIDTITIPVDKIKVVIGKGGEQIDKIIAETGVKIDIDDEGLCSIFSSDQAAIDRAKEII. An S1 motif domain is found at 626-694; that stretch reads GEIYDAKVVR…DKGRVDASMR (69 aa). The span at 700–721 shows a compositional bias: basic and acidic residues; that stretch reads PEGYVEPERKPRERRENGDRRK. The segment at 700 to 773 is disordered; the sequence is PEGYVEPERK…FPELSTKKPE (74 aa). Low complexity predominate over residues 739-748; the sequence is RNNQGNKVGN. The segment covering 751–773 has biased composition (basic and acidic residues); the sequence is FELRERKSHIDEEFPELSTKKPE.

The protein belongs to the polyribonucleotide nucleotidyltransferase family. It depends on Mg(2+) as a cofactor.

The protein resides in the cytoplasm. The catalysed reaction is RNA(n+1) + phosphate = RNA(n) + a ribonucleoside 5'-diphosphate. Its function is as follows. Involved in mRNA degradation. Catalyzes the phosphorolysis of single-stranded polyribonucleotides processively in the 3'- to 5'-direction. The sequence is that of Polyribonucleotide nucleotidyltransferase from Lactococcus lactis subsp. lactis (strain IL1403) (Streptococcus lactis).